The primary structure comprises 491 residues: Ketol-acid reductoisomerase (NADP(+)) (491 aa).

One can recognise a KARI N-terminal Rossmann domain in the interval A15–S208. NADP(+)-binding positions include C45 to Q48, R68, R76, S78, and D108 to Q110. H132 is an active-site residue. G158 contacts NADP(+). KARI C-terminal knotted domains lie at S209–Q344 and Y345–M484. Mg(2+)-binding residues include D217, E221, E389, and E393. S414 serves as a coordination point for substrate.

Belongs to the ketol-acid reductoisomerase family. Mg(2+) serves as cofactor.

The enzyme catalyses (2R)-2,3-dihydroxy-3-methylbutanoate + NADP(+) = (2S)-2-acetolactate + NADPH + H(+). It carries out the reaction (2R,3R)-2,3-dihydroxy-3-methylpentanoate + NADP(+) = (S)-2-ethyl-2-hydroxy-3-oxobutanoate + NADPH + H(+). It participates in amino-acid biosynthesis; L-isoleucine biosynthesis; L-isoleucine from 2-oxobutanoate: step 2/4. Its pathway is amino-acid biosynthesis; L-valine biosynthesis; L-valine from pyruvate: step 2/4. Its function is as follows. Involved in the biosynthesis of branched-chain amino acids (BCAA). Catalyzes an alkyl-migration followed by a ketol-acid reduction of (S)-2-acetolactate (S2AL) to yield (R)-2,3-dihydroxy-isovalerate. In the isomerase reaction, S2AL is rearranged via a Mg-dependent methyl migration to produce 3-hydroxy-3-methyl-2-ketobutyrate (HMKB). In the reductase reaction, this 2-ketoacid undergoes a metal-dependent reduction by NADPH to yield (R)-2,3-dihydroxy-isovalerate. This is Ketol-acid reductoisomerase (NADP(+)) from Escherichia coli O8 (strain IAI1).